We begin with the raw amino-acid sequence, 229 residues long: UPF0758 protein CLL_A0562 (229 aa).

The region spanning 107 to 229 (KIMSPNDLAM…FISLKEKGFI (123 aa)) is the MPN domain. Residues H178, H180, and D191 each coordinate Zn(2+). Positions 178–191 (HNHPSGDPTPSKED) match the JAMM motif motif.

It belongs to the UPF0758 family.

This is UPF0758 protein CLL_A0562 from Clostridium botulinum (strain Eklund 17B / Type B).